Here is an 88-residue protein sequence, read N- to C-terminus: MATKKSGGSSSNGRDSRGRRLGVKKFGSEKVIPGNIIIRQRGTKYHPGRNVGIGKDHTIFSKVSGVVYFRKGALNKTFVDVLEVNSAS.

Residues 1–13 (MATKKSGGSSSNG) are compositionally biased toward low complexity. Positions 1 to 24 (MATKKSGGSSSNGRDSRGRRLGVK) are disordered.

Belongs to the bacterial ribosomal protein bL27 family.

The protein is Large ribosomal subunit protein bL27 of Ehrlichia ruminantium (strain Gardel).